A 287-amino-acid polypeptide reads, in one-letter code: Casein kinase II subunit beta-1 (287 aa).

Residues 1 to 97 (MYRDRGTVNS…ESDVSGSDGE (97 aa)) are disordered. A compositionally biased stretch (basic and acidic residues) spans 13–25 (EVVDRKRINDALE). The span at 41 to 50 (GTVTAATTTA) shows a compositional bias: low complexity. The span at 78 to 97 (SDDESDTDSEESDVSGSDGE) shows a compositional bias: acidic residues.

The protein belongs to the casein kinase 2 subunit beta family. Heterotetramer of two catalytic alpha subunits and two regulatory beta subunits. Interacts with CCA1. Interacts with LHY. In terms of processing, phosphorylated by alpha subunit.

The protein resides in the cytoplasm. It is found in the cytosol. It localises to the nucleus. Its function is as follows. Plays a complex role in regulating the basal catalytic activity of the alpha subunit. The tetrameric holoenzyme CK2, composed of two alpha and two beta subunits, phosphorylates the transcription factor GBFl, resulting in stimulation of its DNA binding activity. CK2 phosphorylates the transcription factor PIF1 after an exposure to light, resulting in a proteasome-dependent degradation of PIF1 and promotion of photomorphogenesis. CK2 phosphorylates translation initiation factors. May participate in the regulation of the initiation of translation. Stimulates the binding of CCA1 to promoters. This chain is Casein kinase II subunit beta-1 (CKB1), found in Arabidopsis thaliana (Mouse-ear cress).